A 307-amino-acid polypeptide reads, in one-letter code: Agmatinase (307 aa).

His-128, Asp-151, His-153, Asp-155, Asp-232, and Asp-234 together coordinate Mn(2+).

The protein belongs to the arginase family. Agmatinase subfamily. It depends on Mn(2+) as a cofactor.

The enzyme catalyses agmatine + H2O = urea + putrescine. Its pathway is amine and polyamine biosynthesis; putrescine biosynthesis via agmatine pathway; putrescine from agmatine: step 1/1. Catalyzes the formation of putrescine from agmatine. The protein is Agmatinase of Neisseria gonorrhoeae (strain ATCC 700825 / FA 1090).